The following is a 244-amino-acid chain: Complement C1q subcomponent subunit A (244 aa).

The first 22 residues, 1-22, serve as a signal peptide directing secretion; the sequence is MEAPRGWLVISVLAISLASSVT. The disordered stretch occupies residues 28 to 94; the sequence is APDGTHGSAG…PGPSGPMGPA (67 aa). Residues 31 to 109 enclose the Collagen-like domain; that stretch reads GTHGSAGIPG…KGTKGSPGNI (79 aa). 2 positions are modified to 4-hydroxyproline: proline 39 and proline 45. 5-hydroxylysine is present on lysine 48. A glycan (O-linked (Gal...) hydroxylysine) is linked at lysine 48. A 4-hydroxyproline mark is found at proline 54 and proline 57. Lysine 67 is modified (5-hydroxylysine). O-linked (Gal...) hydroxylysine glycosylation is present at lysine 67. 4-hydroxyproline is present on residues proline 73, proline 79, and proline 85. Residues 79-94 are compositionally biased toward low complexity; it reads PGRMGYPGPSGPMGPA. A 5-hydroxylysine modification is found at lysine 100. Lysine 100 carries an O-linked (Gal...) hydroxylysine glycan. The C1q domain occupies 110 to 244; sequence KDQPRPAFSA…FSGFLIFPSA (135 aa). The N-linked (GlcNAc...) asparagine glycan is linked to asparagine 146. Cysteine 172 and cysteine 189 are disulfide-bonded. Glutamine 198 contacts Ca(2+).

Core component of the complement C1 complex, a calcium-dependent complex composed of 1 molecule of the C1Q subcomplex, 2 molecules of C1R and 2 molecules of C1S. The C1Q subcomplex is composed 18 subunits: 3 chains of C1QA, C1QB, and C1QC trimerize to form 6 collagen-like triple helices connected to six globular ligand-recognition modules (C1q domain). Interacts with CR1 (via Sushi 24 and Sushi 25 domains). Interacts (via C-terminus) with CD33; this interaction activates CD33 inhibitory motifs. Post-translationally, O-linked glycans are assumed to be the Glc-Gal disaccharides typically found as secondary modifications of hydroxylated lysines in collagen-like domains.

It is found in the secreted. The protein resides in the cell surface. The C1Q subcomplex is inhibited by sulfated molecules, such as triterpenoid sulfates, heparan sulfate, or chondroitin sulfates. Functionally, core component of the complement C1 complex, a multiprotein complex that initiates the classical pathway of the complement system, a cascade of proteins that leads to phagocytosis and breakdown of pathogens and signaling that strengthens the adaptive immune system. The classical complement pathway is initiated by the C1Q subcomplex of the C1 complex, which specifically binds IgG or IgM immunoglobulins complexed with antigens, forming antigen-antibody complexes on the surface of pathogens: C1QA, together with C1QB and C1QC, specifically recognizes and binds the Fc regions of IgG or IgM via its C1q domain. Immunoglobulin-binding activates the proenzyme C1R, which cleaves C1S, initiating the proteolytic cascade of the complement system. The C1Q subcomplex is activated by a hexamer of IgG complexed with antigens, while it is activated by a pentameric IgM. The C1Q subcomplex also recognizes and binds phosphatidylserine exposed on the surface of cells undergoing programmed cell death, possibly promoting activation of the complement system. The chain is Complement C1q subcomponent subunit A (C1QA) from Bos taurus (Bovine).